The sequence spans 470 residues: Uronate isomerase (470 aa).

Belongs to the metallo-dependent hydrolases superfamily. Uronate isomerase family.

The catalysed reaction is D-glucuronate = D-fructuronate. It carries out the reaction aldehydo-D-galacturonate = keto-D-tagaturonate. It functions in the pathway carbohydrate metabolism; pentose and glucuronate interconversion. This chain is Uronate isomerase, found in Salmonella typhi.